The chain runs to 984 residues: Putative formate dehydrogenase SAUSA300_2258 (984 aa).

Residues 3-79 (EHLVVTLDGK…PMTVNTVNND (77 aa)) enclose the 2Fe-2S ferredoxin-type domain. Residues C37, C48, C51, and C63 each coordinate [2Fe-2S] cluster. In terms of domain architecture, 4Fe-4S His(Cys)3-ligated-type spans 79-119 (DVKDAQKEALDRILEKHMLYCTVCDYNNGDCEIHNTMDAWG). [4Fe-4S] cluster contacts are provided by H95, C99, C102, C109, C147, C150, C153, C157, C190, C193, C196, C200, C264, C267, C271, and C299. 2 4Fe-4S ferredoxin-type domains span residues 138-165 (PFYR…VNET) and 181-211 (NDVP…VNME). Residues 252–984 (MRKERIKKTK…YVFPGNQVDK (733 aa)) form a formate dehydrogenase region. Positions 257–313 (IKKTKTVCTYCGVGCSFEVWTKDREILKVQPSHDSPANKIATCVKGKFSWGHINSDQ) constitute a 4Fe-4S Mo/W bis-MGD-type domain.

It in the C-terminal section; belongs to the prokaryotic molybdopterin-containing oxidoreductase family. [2Fe-2S] cluster is required as a cofactor. The cofactor is [4Fe-4S] cluster. Requires Mo-bis(molybdopterin guanine dinucleotide) as cofactor.

The catalysed reaction is formate + NAD(+) = CO2 + NADH. In Staphylococcus aureus (strain USA300), this protein is Putative formate dehydrogenase SAUSA300_2258.